Consider the following 394-residue polypeptide: Subtilisin-like protease CPC735_005570 (394 aa).

An N-terminal signal peptide occupies residues 1 to 21 (MRAIISVALFLSLSLLSAVNA). A propeptide spanning residues 22–114 (AEILSAGDTD…IEHDRIANAR (93 aa)) is cleaved from the precursor. The region spanning 37–110 (SYIVVMRDGL…AVKYIEHDRI (74 aa)) is the Inhibitor I9 domain. In terms of domain architecture, Peptidase S8 spans 123–394 (GWNLARISHK…RLLLYNGSGR (272 aa)). Active-site charge relay system residues include D155 and H186. Residues N216 and N247 are each glycosylated (N-linked (GlcNAc...) asparagine). The active-site Charge relay system is the S340. N-linked (GlcNAc...) asparagine glycosylation is found at N382 and N390.

This sequence belongs to the peptidase S8 family.

The protein resides in the secreted. In terms of biological role, secreted subtilisin-like serine protease with keratinolytic activity that contributes to pathogenicity. This Coccidioides posadasii (strain C735) (Valley fever fungus) protein is Subtilisin-like protease CPC735_005570.